Reading from the N-terminus, the 128-residue chain is Large ribosomal subunit protein bL12 (128 aa).

Belongs to the bacterial ribosomal protein bL12 family. As to quaternary structure, homodimer. Part of the ribosomal stalk of the 50S ribosomal subunit. Forms a multimeric L10(L12)X complex, where L10 forms an elongated spine to which 2 to 4 L12 dimers bind in a sequential fashion. Binds GTP-bound translation factors.

Its function is as follows. Forms part of the ribosomal stalk which helps the ribosome interact with GTP-bound translation factors. Is thus essential for accurate translation. The chain is Large ribosomal subunit protein bL12 from Phenylobacterium zucineum (strain HLK1).